A 134-amino-acid polypeptide reads, in one-letter code: Citrolysin protein 2 (134 aa).

The chain is Citrolysin protein 2 from Citrobacter freundii.